The chain runs to 460 residues: MSKLNIVVLAAGLGKRMYSALPKVLHPLAGKPLLVHVLDTARALAPHTTCVIYGHGGETVPQTIADESLIWVPQIPQLGTGHAVMQALPHIEKEGITLILYGDVPLTSVETLKKLIAMAGKQTLGLLTVELPDPAGYGRIVRHSETGEVAAIVEEKDASESQRSIGEINTGIMAVPNRYLHGWLCKLENNNAQGEYYLTDIVAMAVKDGVKVATANPAYVWETTGVNSKVQLAGLERIYQTAQANKLLEQGVALADPARIDIRGKLSCGRDVMIDINCIFEGDVQLDDGVKVGAHTILKDVRVAADSVIAPFSLIEAAEIGRNCRIGPYARIRPGTRLEDEVHIGNFVEVKNSALAAGSKANHLSYIGDAVVGRSVNIGAGTITCNYDGANKYQTIIEDDVFVGSDTQLIAPVRVARGSTIGAGSTITRDTPPDMLTLSRAKQLSIDGWKRPVKKPKPKN.

Residues 1–229 are pyrophosphorylase; the sequence is MSKLNIVVLA…VWETTGVNSK (229 aa). UDP-N-acetyl-alpha-D-glucosamine is bound by residues 9–12, Lys23, Gln74, 79–80, 101–103, Gly138, Glu154, Asn169, and Asn227; these read LAAG, GT, and YGD. Asp103 contacts Mg(2+). Asn227 contacts Mg(2+). The tract at residues 230–250 is linker; that stretch reads VQLAGLERIYQTAQANKLLEQ. The N-acetyltransferase stretch occupies residues 251 to 460; the sequence is GVALADPARI…RPVKKPKPKN (210 aa). Positions 333 and 351 each coordinate UDP-N-acetyl-alpha-D-glucosamine. His363 functions as the Proton acceptor in the catalytic mechanism. Positions 366 and 377 each coordinate UDP-N-acetyl-alpha-D-glucosamine. Residues Ala380, 386–387, Ser405, Ala423, and Arg440 contribute to the acetyl-CoA site; that span reads NY.

In the N-terminal section; belongs to the N-acetylglucosamine-1-phosphate uridyltransferase family. It in the C-terminal section; belongs to the transferase hexapeptide repeat family. Homotrimer. The cofactor is Mg(2+).

The protein localises to the cytoplasm. The catalysed reaction is alpha-D-glucosamine 1-phosphate + acetyl-CoA = N-acetyl-alpha-D-glucosamine 1-phosphate + CoA + H(+). The enzyme catalyses N-acetyl-alpha-D-glucosamine 1-phosphate + UTP + H(+) = UDP-N-acetyl-alpha-D-glucosamine + diphosphate. It functions in the pathway nucleotide-sugar biosynthesis; UDP-N-acetyl-alpha-D-glucosamine biosynthesis; N-acetyl-alpha-D-glucosamine 1-phosphate from alpha-D-glucosamine 6-phosphate (route II): step 2/2. It participates in nucleotide-sugar biosynthesis; UDP-N-acetyl-alpha-D-glucosamine biosynthesis; UDP-N-acetyl-alpha-D-glucosamine from N-acetyl-alpha-D-glucosamine 1-phosphate: step 1/1. The protein operates within bacterial outer membrane biogenesis; LPS lipid A biosynthesis. Functionally, catalyzes the last two sequential reactions in the de novo biosynthetic pathway for UDP-N-acetylglucosamine (UDP-GlcNAc). The C-terminal domain catalyzes the transfer of acetyl group from acetyl coenzyme A to glucosamine-1-phosphate (GlcN-1-P) to produce N-acetylglucosamine-1-phosphate (GlcNAc-1-P), which is converted into UDP-GlcNAc by the transfer of uridine 5-monophosphate (from uridine 5-triphosphate), a reaction catalyzed by the N-terminal domain. This is Bifunctional protein GlmU from Nitrosospira multiformis (strain ATCC 25196 / NCIMB 11849 / C 71).